Reading from the N-terminus, the 43-residue chain is Potassium channel toxin gamma-KTx 4.9 (43 aa).

4 cysteine pairs are disulfide-bonded: Cys-5–Cys-23, Cys-11–Cys-34, Cys-20–Cys-39, and Cys-24–Cys-41.

Belongs to the ergtoxin family. Gamma-KTx 4 subfamily. In terms of tissue distribution, expressed by the venom gland.

The protein resides in the secreted. In terms of biological role, reversibly blocks Kv11/ERG potassium channels. This Centruroides sculpturatus (Arizona bark scorpion) protein is Potassium channel toxin gamma-KTx 4.9.